We begin with the raw amino-acid sequence, 238 residues long: Chloride intracellular channel exl-1 (238 aa).

This sequence belongs to the chloride channel CLIC family. As to expression, expressed in the intestine, neurons and muscles.

Its subcellular location is the cytoplasm. The protein localises to the membrane. The protein resides in the lysosome membrane. It localises to the golgi apparatus membrane. Functionally, probable chloride channel. The chain is Chloride intracellular channel exl-1 (exl-1) from Caenorhabditis elegans.